Consider the following 379-residue polypeptide: Cytochrome b (379 aa).

A run of 4 helical transmembrane segments spans residues 33 to 53, 77 to 98, 113 to 133, and 178 to 198; these read FGSL…FLAM, WLIR…FIHV, WNIG…GYVL, and FFAF…VHLL. Heme b-binding residues include H83 and H97. Residues H182 and H196 each contribute to the heme b site. H201 is a binding site for a ubiquinone. The next 4 membrane-spanning stretches (helical) occupy residues 226–246, 288–308, 320–340, and 347–367; these read TKDL…ALFF, LGGV…PLLN, ITQV…WIGG, and XTMI…ILIP.

Belongs to the cytochrome b family. The cytochrome bc1 complex contains 11 subunits: 3 respiratory subunits (MT-CYB, CYC1 and UQCRFS1), 2 core proteins (UQCRC1 and UQCRC2) and 6 low-molecular weight proteins (UQCRH/QCR6, UQCRB/QCR7, UQCRQ/QCR8, UQCR10/QCR9, UQCR11/QCR10 and a cleavage product of UQCRFS1). This cytochrome bc1 complex then forms a dimer. Heme b serves as cofactor.

It is found in the mitochondrion inner membrane. Functionally, component of the ubiquinol-cytochrome c reductase complex (complex III or cytochrome b-c1 complex) that is part of the mitochondrial respiratory chain. The b-c1 complex mediates electron transfer from ubiquinol to cytochrome c. Contributes to the generation of a proton gradient across the mitochondrial membrane that is then used for ATP synthesis. This chain is Cytochrome b (MT-CYB), found in Akodon boliviensis (Bolivian grass mouse).